A 344-amino-acid chain; its full sequence is DNA-directed RNA polymerase subunit alpha (344 aa).

The interval 1–246 (MLVEKFLKDF…EFLFPLVDFE (246 aa)) is alpha N-terminal domain (alpha-NTD). The segment at 259–344 (ESSNLLDMSI…VLSKNVKISE (86 aa)) is alpha C-terminal domain (alpha-CTD).

It belongs to the RNA polymerase alpha chain family. Homodimer. The RNAP catalytic core consists of 2 alpha, 1 beta, 1 beta' and 1 omega subunit. When a sigma factor is associated with the core the holoenzyme is formed, which can initiate transcription.

The catalysed reaction is RNA(n) + a ribonucleoside 5'-triphosphate = RNA(n+1) + diphosphate. In terms of biological role, DNA-dependent RNA polymerase catalyzes the transcription of DNA into RNA using the four ribonucleoside triphosphates as substrates. This Borreliella burgdorferi (strain ATCC 35210 / DSM 4680 / CIP 102532 / B31) (Borrelia burgdorferi) protein is DNA-directed RNA polymerase subunit alpha.